Consider the following 373-residue polypeptide: Glutamate 5-kinase (373 aa).

Lys15 lines the ATP pocket. Residues Ser55, Asp142, and Asn154 each contribute to the substrate site. ATP contacts are provided by residues 174-175 (TD) and 216-222 (TGGMVTK). Positions 281–359 (SGRVIVDDGA…GEIEAILGYK (79 aa)) constitute a PUA domain.

It belongs to the glutamate 5-kinase family.

The protein resides in the cytoplasm. It catalyses the reaction L-glutamate + ATP = L-glutamyl 5-phosphate + ADP. Its pathway is amino-acid biosynthesis; L-proline biosynthesis; L-glutamate 5-semialdehyde from L-glutamate: step 1/2. Catalyzes the transfer of a phosphate group to glutamate to form L-glutamate 5-phosphate. The polypeptide is Glutamate 5-kinase (Geobacter metallireducens (strain ATCC 53774 / DSM 7210 / GS-15)).